The following is a 507-amino-acid chain: Glycerol kinase (507 aa).

T12 contributes to the ADP binding site. 3 residues coordinate ATP: T12, T13, and S14. Sn-glycerol 3-phosphate is bound at residue T12. Residue R16 coordinates ADP. The sn-glycerol 3-phosphate site is built by R82, E83, Y134, and D250. The glycerol site is built by R82, E83, Y134, D250, and Q251. ADP is bound by residues T272 and G316. Residues T272, G316, Q320, and G417 each coordinate ATP. ADP contacts are provided by G417 and N421.

It belongs to the FGGY kinase family.

It catalyses the reaction glycerol + ATP = sn-glycerol 3-phosphate + ADP + H(+). The protein operates within polyol metabolism; glycerol degradation via glycerol kinase pathway; sn-glycerol 3-phosphate from glycerol: step 1/1. Its activity is regulated as follows. Inhibited by fructose 1,6-bisphosphate (FBP). In terms of biological role, key enzyme in the regulation of glycerol uptake and metabolism. Catalyzes the phosphorylation of glycerol to yield sn-glycerol 3-phosphate. This Beijerinckia indica subsp. indica (strain ATCC 9039 / DSM 1715 / NCIMB 8712) protein is Glycerol kinase.